The sequence spans 143 residues: Large ribosomal subunit protein uL11 (143 aa).

This sequence belongs to the universal ribosomal protein uL11 family. Part of the ribosomal stalk of the 50S ribosomal subunit. Interacts with L10 and the large rRNA to form the base of the stalk. L10 forms an elongated spine to which L12 dimers bind in a sequential fashion forming a multimeric L10(L12)X complex. Post-translationally, one or more lysine residues are methylated.

Functionally, forms part of the ribosomal stalk which helps the ribosome interact with GTP-bound translation factors. The protein is Large ribosomal subunit protein uL11 of Zymomonas mobilis subsp. mobilis (strain ATCC 31821 / ZM4 / CP4).